Here is a 302-residue protein sequence, read N- to C-terminus: MPTATALRIDAGSGASDLGEAIGRLAERSLVLELELTPKPGLVDRANSGAHRDMDVGTFRASIAAISPWFSFFFERGVDGSAVPVEDFLRYIRADGMACERAMFAATLGVNTHKGSVFSFGLLCAAAGRLHGRGRPLSRASVCAEVSHICAGLVKRELLLPAAARTAGELLYWQHGLTGARGEAQSGFATACAHGVVPYLLARAKGMDEERSLFEALLQLMAHNRDTNIVSRGGMEGLCLVQAEARRLLDCPTPSRSARTAQLAAFDQLLIERNLSPGGSADLLAVSWFLANLDELVCKCVA.

Belongs to the CitG/MdcB family.

The catalysed reaction is 3'-dephospho-CoA + ATP = 2'-(5''-triphospho-alpha-D-ribosyl)-3'-dephospho-CoA + adenine. The polypeptide is Probable 2-(5''-triphosphoribosyl)-3'-dephosphocoenzyme-A synthase (Albidiferax ferrireducens (strain ATCC BAA-621 / DSM 15236 / T118) (Rhodoferax ferrireducens)).